A 384-amino-acid polypeptide reads, in one-letter code: Putative 8-amino-7-oxononanoate synthase (384 aa).

R19 lines the substrate pocket. 106–107 (GY) contributes to the pyridoxal 5'-phosphate binding site. H131 is a binding site for substrate. Pyridoxal 5'-phosphate contacts are provided by residues S177, 202-205 (DDAH), and 233-236 (TLSK). N6-(pyridoxal phosphate)lysine is present on K236.

It belongs to the class-II pyridoxal-phosphate-dependent aminotransferase family. BioF subfamily. In terms of assembly, homodimer. Requires pyridoxal 5'-phosphate as cofactor.

The enzyme catalyses 6-carboxyhexanoyl-[ACP] + L-alanine + H(+) = (8S)-8-amino-7-oxononanoate + holo-[ACP] + CO2. It participates in cofactor biosynthesis; biotin biosynthesis. Catalyzes the decarboxylative condensation of pimeloyl-[acyl-carrier protein] and L-alanine to produce 8-amino-7-oxononanoate (AON), [acyl-carrier protein], and carbon dioxide. The polypeptide is Putative 8-amino-7-oxononanoate synthase (bioF) (Desulforudis audaxviator (strain MP104C)).